A 306-amino-acid chain; its full sequence is Plant-type L-asparaginase (306 aa).

The active-site Nucleophile is Thr-176. Residues 203 to 206 (RVGD) and 225 to 228 (TGLG) contribute to the substrate site.

The protein belongs to the Ntn-hydrolase family. As to quaternary structure, heterotetramer of two alpha and two beta chains arranged as a dimer of alpha/beta heterodimers. In terms of processing, autocleaved. Generates the alpha and beta subunits. The N-terminal residue of the beta subunit is thought to be responsible for the nucleophile hydrolase activity.

It carries out the reaction L-asparagine + H2O = L-aspartate + NH4(+). Catalyzes the hydrolysis of L-asparagine into L-aspartate and ammonia. In Pyrococcus furiosus (strain ATCC 43587 / DSM 3638 / JCM 8422 / Vc1), this protein is Plant-type L-asparaginase.